Consider the following 86-residue polypeptide: U15-lycotoxin-Ls1g (86 aa).

The signal sequence occupies residues 1–20 (MNSKIFAVLLLLGLLSCVLS). Residues 21 to 66 (DQYCPKSSITACKKMNIRNDCCKDDDCTGGSWCCATPCGNFCKYPA) enclose the WAP domain. 5 disulfides stabilise this stretch: C24/C54, C32/C58, C41/C53, C42/C80, and C47/C62.

Belongs to the venom protein 11 family. 01 (wap-1) subfamily. In terms of processing, contains 5 disulfide bonds. Expressed by the venom gland.

It is found in the secreted. Functionally, has antibacterial activity. The sequence is that of U15-lycotoxin-Ls1g from Lycosa singoriensis (Wolf spider).